Reading from the N-terminus, the 268-residue chain is MLGITVLAAILACASCCGNPAFPPNLSTRVVGGEDAVPNSWPWQVSLQYLKDDTWRHTCGGSLITTSHVLTAAHCINKDFTYRVGLGKYNLTVEDEEGSVYAEVDTIYVHEKWNRLFLWNDIAIIKLAEPVELSNTIQVACIPEEGSLLPQDYPCYVTGWGRLWTNGPIAEVLQQGLQPIVSHATCSRLDWWFIKVRKTMVCAGGDGVISACNGDSGGPLNCQAEDGSWQVHGIVSFGSSSGCNVHKKPVVFTRVSAYNDWINEKIQL.

The N-terminal stretch at 1 to 16 is a signal peptide; the sequence is MLGITVLAAILACASC. A propeptide spans 17-29 (activation peptide); sequence CGNPAFPPNLSTR. Intrachain disulfides connect Cys17–Cys141, Cys59–Cys75, Cys155–Cys222, Cys186–Cys202, and Cys212–Cys243. The N-linked (GlcNAc...) asparagine glycan is linked to Asn25. One can recognise a Peptidase S1 domain in the interval 30 to 267; the sequence is VVGGEDAVPN…YNDWINEKIQ (238 aa). His74 functions as the Charge relay system in the catalytic mechanism. A glycan (N-linked (GlcNAc...) asparagine) is linked at Asn90. The Charge relay system role is filled by Asp121. Catalysis depends on Ser216, which acts as the Charge relay system.

It belongs to the peptidase S1 family. Elastase subfamily. In terms of tissue distribution, pancreas.

It carries out the reaction Preferential cleavage: Leu-|-Xaa, Tyr-|-Xaa, Phe-|-Xaa, Met-|-Xaa, Trp-|-Xaa, Gln-|-Xaa, Asn-|-Xaa.. Regulates activation and degradation of trypsinogens and procarboxypeptidases by targeting specific cleavage sites within their zymogen precursors. Has chymotrypsin-type protease activity and hypocalcemic activity. Cleaves TRY4 and TRY5 and thereby inhibits their autoactivation. The protein is Chymotrypsin-C (Ctrc) of Rattus norvegicus (Rat).